We begin with the raw amino-acid sequence, 132 residues long: Small ribosomal subunit protein uS8 (132 aa).

This sequence belongs to the universal ribosomal protein uS8 family. In terms of assembly, part of the 30S ribosomal subunit. Contacts proteins S5 and S12.

In terms of biological role, one of the primary rRNA binding proteins, it binds directly to 16S rRNA central domain where it helps coordinate assembly of the platform of the 30S subunit. The chain is Small ribosomal subunit protein uS8 from Clostridioides difficile (strain 630) (Peptoclostridium difficile).